The following is a 92-amino-acid chain: Small ribosomal subunit protein uS19c (92 aa).

It belongs to the universal ribosomal protein uS19 family.

It localises to the plastid. The protein localises to the chloroplast. Functionally, protein S19 forms a complex with S13 that binds strongly to the 16S ribosomal RNA. This is Small ribosomal subunit protein uS19c from Nicotiana sylvestris (Wood tobacco).